Reading from the N-terminus, the 232-residue chain is Thiamine import ATP-binding protein ThiQ (232 aa).

Residues 2–230 (LKLTDITWLY…KASASALLGI (229 aa)) form the ABC transporter domain. 32–39 (GPSGAGKS) is an ATP binding site.

This sequence belongs to the ABC transporter superfamily. Thiamine importer (TC 3.A.1.19.1) family. In terms of assembly, the complex is composed of two ATP-binding proteins (ThiQ), two transmembrane proteins (ThiP) and a solute-binding protein (ThiB).

It is found in the cell inner membrane. It catalyses the reaction thiamine(out) + ATP + H2O = thiamine(in) + ADP + phosphate + H(+). Its function is as follows. Part of the ABC transporter complex ThiBPQ involved in thiamine import. Responsible for energy coupling to the transport system. The sequence is that of Thiamine import ATP-binding protein ThiQ from Escherichia coli O157:H7.